The primary structure comprises 288 residues: Acetyl-coenzyme A carboxylase carboxyl transferase subunit beta (288 aa).

In terms of domain architecture, CoA carboxyltransferase N-terminal spans 34–288; it reads LFAKCPACKH…HLVAFHGGGQ (255 aa). Residues Cys38, Cys41, Cys56, and Cys59 each contribute to the Zn(2+) site. The C4-type zinc finger occupies 38-59; that stretch reads CPACKHMIYKKDLGLAKICPTC.

This sequence belongs to the AccD/PCCB family. As to quaternary structure, acetyl-CoA carboxylase is a heterohexamer composed of biotin carboxyl carrier protein (AccB), biotin carboxylase (AccC) and two subunits each of ACCase subunit alpha (AccA) and ACCase subunit beta (AccD). Requires Zn(2+) as cofactor.

It localises to the cytoplasm. It catalyses the reaction N(6)-carboxybiotinyl-L-lysyl-[protein] + acetyl-CoA = N(6)-biotinyl-L-lysyl-[protein] + malonyl-CoA. It participates in lipid metabolism; malonyl-CoA biosynthesis; malonyl-CoA from acetyl-CoA: step 1/1. In terms of biological role, component of the acetyl coenzyme A carboxylase (ACC) complex. Biotin carboxylase (BC) catalyzes the carboxylation of biotin on its carrier protein (BCCP) and then the CO(2) group is transferred by the transcarboxylase to acetyl-CoA to form malonyl-CoA. The sequence is that of Acetyl-coenzyme A carboxylase carboxyl transferase subunit beta from Streptococcus pyogenes serotype M28 (strain MGAS6180).